The chain runs to 95 residues: Envelope glycoprotein N (95 aa).

The N-terminal stretch at 1–26 (MGLMDIHNAVCSLVIGVAILIATSQA) is a signal peptide. At 27–55 (TFVDWGSSITSMGDFWESTCSAVGVSIAF) the chain is on the virion surface side. A helical transmembrane segment spans residues 56-76 (SSGFSVLFYMGLVAVISALLA). Residues 77-95 (GSYHACFRLFTADMFKEEW) are Intravirion-facing.

The protein belongs to the herpesviridae glycoprotein N family. As to quaternary structure, interacts (via N-terminus) with gM (via N-terminus). The gM-gN heterodimer forms the gCII complex.

It is found in the virion membrane. The protein localises to the host membrane. The protein resides in the host Golgi apparatus. Its subcellular location is the host trans-Golgi network. Functionally, envelope glycoprotein necessary for proper maturation of gM and modulation of its membrane fusion activity. Also plays a critical role in virion morphogenesis. This Gallus gallus (Chicken) protein is Envelope glycoprotein N.